The following is a 1370-amino-acid chain: DNA-directed RNA polymerase subunit beta (1370 aa).

Belongs to the RNA polymerase beta chain family. As to quaternary structure, the RNAP catalytic core consists of 2 alpha, 1 beta, 1 beta' and 1 omega subunit. When a sigma factor is associated with the core the holoenzyme is formed, which can initiate transcription.

The enzyme catalyses RNA(n) + a ribonucleoside 5'-triphosphate = RNA(n+1) + diphosphate. DNA-dependent RNA polymerase catalyzes the transcription of DNA into RNA using the four ribonucleoside triphosphates as substrates. This Bordetella bronchiseptica (strain ATCC BAA-588 / NCTC 13252 / RB50) (Alcaligenes bronchisepticus) protein is DNA-directed RNA polymerase subunit beta.